A 462-amino-acid chain; its full sequence is UDP-N-acetylmuramate--L-alanine ligase (462 aa).

117–123 (GTHGKTT) contributes to the ATP binding site.

Belongs to the MurCDEF family.

Its subcellular location is the cytoplasm. The enzyme catalyses UDP-N-acetyl-alpha-D-muramate + L-alanine + ATP = UDP-N-acetyl-alpha-D-muramoyl-L-alanine + ADP + phosphate + H(+). The protein operates within cell wall biogenesis; peptidoglycan biosynthesis. Cell wall formation. In Streptomyces coelicolor (strain ATCC BAA-471 / A3(2) / M145), this protein is UDP-N-acetylmuramate--L-alanine ligase.